The following is a 412-amino-acid chain: Protein trichome birefringence-like 13 (412 aa).

A helical; Signal-anchor for type II membrane protein transmembrane segment spans residues 9-29; sequence PSLFPLLSLLCFISIFLLLSL. The short motif at 137 to 139 is the GDS motif element; that stretch reads GDS. The short motif at 385-399 is the DCXHWCLPGXXDXWN motif element; sequence DCMHWCLPGLTDTWN.

The protein belongs to the PC-esterase family. TBL subfamily.

The protein resides in the membrane. May act as a bridging protein that binds pectin and other cell wall polysaccharides. Probably involved in maintaining esterification of pectins. May be involved in the specific O-acetylation of cell wall polymers. The sequence is that of Protein trichome birefringence-like 13 (TBL13) from Arabidopsis thaliana (Mouse-ear cress).